We begin with the raw amino-acid sequence, 793 residues long: Phenylalanine--tRNA ligase beta subunit (793 aa).

One can recognise a tRNA-binding domain in the interval 39-148 (AGQFTHVIVA…DEAPIGMDLR (110 aa)). In terms of domain architecture, B5 spans 401–477 (PGTVSFLFDT…RLYGYDKLQA (77 aa)). D455, D461, E464, and E465 together coordinate Mg(2+). The 95-residue stretch at 698 to 792 (SKYPQIRRDL…LENEFSILLR (95 aa)) folds into the FDX-ACB domain.

This sequence belongs to the phenylalanyl-tRNA synthetase beta subunit family. Type 1 subfamily. In terms of assembly, tetramer of two alpha and two beta subunits. Requires Mg(2+) as cofactor.

It is found in the cytoplasm. It carries out the reaction tRNA(Phe) + L-phenylalanine + ATP = L-phenylalanyl-tRNA(Phe) + AMP + diphosphate + H(+). The polypeptide is Phenylalanine--tRNA ligase beta subunit (Legionella pneumophila (strain Lens)).